Here is a 286-residue protein sequence, read N- to C-terminus: 4-diphosphocytidyl-2-C-methyl-D-erythritol kinase (286 aa).

Lys12 is a catalytic residue. An ATP-binding site is contributed by 96–106 (PHGAGLGGGSA). The active site involves Asp138.

It belongs to the GHMP kinase family. IspE subfamily.

The enzyme catalyses 4-CDP-2-C-methyl-D-erythritol + ATP = 4-CDP-2-C-methyl-D-erythritol 2-phosphate + ADP + H(+). It functions in the pathway isoprenoid biosynthesis; isopentenyl diphosphate biosynthesis via DXP pathway; isopentenyl diphosphate from 1-deoxy-D-xylulose 5-phosphate: step 3/6. Catalyzes the phosphorylation of the position 2 hydroxy group of 4-diphosphocytidyl-2C-methyl-D-erythritol. The polypeptide is 4-diphosphocytidyl-2-C-methyl-D-erythritol kinase (Nitratidesulfovibrio vulgaris (strain DP4) (Desulfovibrio vulgaris)).